We begin with the raw amino-acid sequence, 549 residues long: E-selectin (549 aa).

A signal peptide spans 1–21 (MNASCFLSALTFVLLIGKSIA). In terms of domain architecture, C-type lectin spans 22 to 139 (WYYNASSELM…CDKKKLALCY (118 aa)). Residues 22 to 494 (WYYNASSELM…CEAPANPPRP (473 aa)) are Extracellular-facing. N-linked (GlcNAc...) asparagine glycosylation is found at asparagine 25 and asparagine 60. Disulfide bonds link cysteine 40–cysteine 138, cysteine 111–cysteine 130, cysteine 143–cysteine 154, cysteine 148–cysteine 163, cysteine 165–cysteine 174, cysteine 180–cysteine 225, cysteine 193–cysteine 206, cysteine 210–cysteine 238, cysteine 243–cysteine 287, cysteine 256–cysteine 269, cysteine 273–cysteine 300, cysteine 305–cysteine 350, cysteine 336–cysteine 363, cysteine 368–cysteine 413, cysteine 399–cysteine 426, cysteine 431–cysteine 472, and cysteine 458–cysteine 485. Residues glutamate 101, asparagine 103, and glutamate 109 each contribute to the Ca(2+) site. Residues 101 to 109 (EPNNKQRNE), 113 to 118 (EIYIQR), and 126 to 128 (NDE) each bind a carbohydrate. Ca(2+) contacts are provided by asparagine 126 and aspartate 127. In terms of domain architecture, EGF-like spans 140–175 (TASCTNTSCSGHGECVETINSYTCKCHPGFLGPKCD). An N-linked (GlcNAc...) asparagine glycan is attached at asparagine 145. Sushi domains follow at residues 178–240 (VTCQ…ACHV), 241–302 (VECK…SCKA), 303–365 (VTCD…VCKA), 366–428 (SQCE…TCAG), and 429–487 (VQCS…TCEA). N-linked (GlcNAc...) asparagine glycans are attached at residues asparagine 192 and asparagine 203. Asparagine 266 carries an N-linked (GlcNAc...) asparagine glycan. Asparagine 313, asparagine 320, and asparagine 333 each carry an N-linked (GlcNAc...) asparagine glycan. Asparagine 441 and asparagine 465 each carry an N-linked (GlcNAc...) asparagine glycan. The helical transmembrane segment at 495–516 (LVVALSVAATSLLTLSSLIYVL) threads the bilayer. The Cytoplasmic portion of the chain corresponds to 517-549 (KRFFWKKAKKFVPASSCQSLQSFENYQGPSYII).

It belongs to the selectin/LECAM family. Interacts with SELPLG/PSGL1 and PODXL2 through the sialyl Lewis X epitope. SELPLG sulfation appears not to be required for this interaction.

The protein localises to the cell membrane. Functionally, cell-surface glycoprotein having a role in immunoadhesion. Mediates in the adhesion of blood neutrophils in cytokine-activated endothelium through interaction with SELPLG/PSGL1. May have a role in capillary morphogenesis. The chain is E-selectin (Sele) from Rattus norvegicus (Rat).